Consider the following 222-residue polypeptide: Glutathione S-transferase A2 (222 aa).

The residue at position 2 (Ala2) is an N-acetylalanine. Positions Glu3 to Gly83 constitute a GST N-terminal domain. N6-succinyllysine is present on Lys4. Glutathione-binding positions include Tyr9, Arg45, Gln54–Val55, and Gln67–Thr68. Residues Asp85 to Pro207 enclose the GST C-terminal domain. The disordered stretch occupies residues Gln199 to Phe222. The segment covering Pro206–Phe222 has biased composition (basic and acidic residues).

The protein belongs to the GST superfamily. Alpha family. As to quaternary structure, homodimer or heterodimer of GSTA1 and GSTA2. In terms of tissue distribution, liver.

The protein resides in the cytoplasm. The enzyme catalyses RX + glutathione = an S-substituted glutathione + a halide anion + H(+). Functionally, catalyzes the conjugation of glutathione to a large variety of electrophilic compounds. The protein is Glutathione S-transferase A2 (GSTA2) of Homo sapiens (Human).